The chain runs to 158 residues: G-protein-signaling modulator 3 (158 aa).

The segment at 1-53 (MEAERPQEDGEQSLPQDDQGWPPVNSTARPWRSAPPSPPPPGTRHTALGPRSG) is disordered. Phosphoserine is present on residues Ser33 and Ser37. The segment covering 33-42 (SAPPSPPPPG) has biased composition (pro residues). Over residues 43–53 (TRHTALGPRSG) the composition is skewed to low complexity. Residues Ser54 and Ser57 each carry the phosphoserine modification. Thr60 is subject to Phosphothreonine. A GoLoco 1 domain is found at 60–82 (TELLLDLVAEAQSRRLEEQRAAF). The interval 78 to 97 (QRAAFHTPKVPPSLAPTPPR) is disordered. Over residues 86 to 96 (KVPPSLAPTPP) the composition is skewed to pro residues. GoLoco domains lie at 102–124 (KEQL…RSDP) and 130–153 (GQEL…RSRP).

The protein localises to the cytoplasm. Interacts with subunit of G(i) alpha proteins and regulates the activation of G(i) alpha proteins. This chain is G-protein-signaling modulator 3 (Gpsm3), found in Rattus norvegicus (Rat).